A 180-amino-acid chain; its full sequence is Thioredoxin 3 (180 aa).

The Cytoplasmic segment spans residues 1–3; it reads MAL. Residues 4-24 traverse the membrane as a helical; Signal-anchor for type II membrane protein segment; the sequence is ICIGSVCFSLFHIGVIILLII. Topologically, residues 25–180 are lumenal; that stretch reads NYFSSHIKKI…FQKYCLEKAK (156 aa). The Thioredoxin domain maps to 29–176; that stretch reads SHIKKIFPSF…IEKAFQKYCL (148 aa). Active-site nucleophile residues include C99 and C102. Residues C99 and C102 are joined by a disulfide bond.

This sequence belongs to the thioredoxin family. Post-translationally, the disulfide bond between Cys-99 and Cys-102 acts as a redox-active center and is reduced by thioredoxin reductase TRXR.

It localises to the endoplasmic reticulum membrane. Participates in various redox reactions through the reversible oxidation of its active center dithiol to a disulfide and catalyzes dithiol-disulfide exchange reactions. This Plasmodium falciparum (isolate 3D7) protein is Thioredoxin 3.